A 149-amino-acid chain; its full sequence is Sex-regulated protein janus-A (149 aa).

Lys46 serves as a coordination point for substrate. His77 (proton acceptor) is an active-site residue. 118–120 (STG) is a substrate binding site.

Belongs to the janus family.

In terms of biological role, janA and janB regulate somatic sex differentiation. This is Sex-regulated protein janus-A (janA) from Drosophila pseudoobscura pseudoobscura (Fruit fly).